A 404-amino-acid chain; its full sequence is Deoxyguanosinetriphosphate triphosphohydrolase-like protein 1 (404 aa).

One can recognise an HD domain in the interval 75–219 (RLTHSIEVAQ…AAIADDIAYN (145 aa)).

The protein belongs to the dGTPase family. Type 2 subfamily.

The protein is Deoxyguanosinetriphosphate triphosphohydrolase-like protein 1 of Mesorhizobium japonicum (strain LMG 29417 / CECT 9101 / MAFF 303099) (Mesorhizobium loti (strain MAFF 303099)).